The primary structure comprises 122 residues: Large ribosomal subunit protein uL14 (122 aa).

The protein belongs to the universal ribosomal protein uL14 family. Part of the 50S ribosomal subunit. Forms a cluster with proteins L3 and L19. In the 70S ribosome, L14 and L19 interact and together make contacts with the 16S rRNA in bridges B5 and B8.

Its function is as follows. Binds to 23S rRNA. Forms part of two intersubunit bridges in the 70S ribosome. This chain is Large ribosomal subunit protein uL14, found in Acidovorax sp. (strain JS42).